The following is a 680-amino-acid chain: DNA-directed RNA polymerase subunit beta' (680 aa).

Zn(2+)-binding residues include Cys-69, Cys-71, Cys-87, and Cys-90. Mg(2+) contacts are provided by Asp-489, Asp-491, and Asp-493.

This sequence belongs to the RNA polymerase beta' chain family. RpoC1 subfamily. In plastids the minimal PEP RNA polymerase catalytic core is composed of four subunits: alpha, beta, beta', and beta''. When a (nuclear-encoded) sigma factor is associated with the core the holoenzyme is formed, which can initiate transcription. Requires Mg(2+) as cofactor. Zn(2+) is required as a cofactor.

The protein resides in the plastid. Its subcellular location is the chloroplast. It carries out the reaction RNA(n) + a ribonucleoside 5'-triphosphate = RNA(n+1) + diphosphate. Its function is as follows. DNA-dependent RNA polymerase catalyzes the transcription of DNA into RNA using the four ribonucleoside triphosphates as substrates. The sequence is that of DNA-directed RNA polymerase subunit beta' from Arabidopsis thaliana (Mouse-ear cress).